Reading from the N-terminus, the 101-residue chain is Small ribosomal subunit protein uS14 (101 aa).

Belongs to the universal ribosomal protein uS14 family. Part of the 30S ribosomal subunit. Contacts proteins S3 and S10.

Functionally, binds 16S rRNA, required for the assembly of 30S particles and may also be responsible for determining the conformation of the 16S rRNA at the A site. The polypeptide is Small ribosomal subunit protein uS14 (Colwellia psychrerythraea (strain 34H / ATCC BAA-681) (Vibrio psychroerythus)).